The primary structure comprises 202 residues: Energy-coupling factor transporter transmembrane protein BioN (202 aa).

3 helical membrane passes run 21–40 (LLSL…LLLL), 44–63 (VLVA…EALL), and 68–90 (IFLT…AALV).

The protein belongs to the CbiQ family. As to quaternary structure, part of a biotin transporter complex composed of BioM, BioN and BioY.

Its subcellular location is the cell inner membrane. Its function is as follows. Involved in biotin uptake. This Rhizobium etli (strain ATCC 51251 / DSM 11541 / JCM 21823 / NBRC 15573 / CFN 42) protein is Energy-coupling factor transporter transmembrane protein BioN (bioN).